The sequence spans 293 residues: Actin-related protein 2/3 complex subunit 2 (293 aa).

It belongs to the ARPC2 family. As to quaternary structure, component of the Arp2/3 complex composed of arpB/Arp2, arpC/Arp3, arcA/p41-arc, arcB/p34-arc, arcC/p21-arc, arcD/p20-arc and arcE/p16-arc. Interacts with carmil (via the region between the LRR domain and COOH-terminal proline-rich domain); carmil is required for Arp2/3-dependent actin nucleation. Arp2/3 complex, MyoB, MyoC, and the alpha and beta subunits of capping protein all form a larger complex with carmil.

Its subcellular location is the cytoplasm. It localises to the cytoskeleton. It is found in the cell projection. The protein localises to the cytosol. The protein resides in the cell cortex. Its subcellular location is the pseudopodium. Functions as a component of the Arp2/3 complex which is involved in regulation of actin polymerization and together with an activating nucleation-promoting factor (NPF) mediates the formation of branched actin networks. Seems to contact the pointed end of the daughter actin filament. The Arp2/3 complex is involved in organizing the actin system in cell motility and chemotaxis, in phagocytosis and macropinocytosis, at late steps of endosome processing, and in mitosis. In concert with a group of other proteins, the Arp2/3 complex plays a general role in the rapid activation and adaptation of the actin system to its multiple functions. The polypeptide is Actin-related protein 2/3 complex subunit 2 (arcB) (Dictyostelium discoideum (Social amoeba)).